The following is a 448-amino-acid chain: tRNA modification GTPase MnmE (448 aa).

Arginine 24, glutamate 81, and lysine 120 together coordinate (6S)-5-formyl-5,6,7,8-tetrahydrofolate. Positions 216-373 (GLNVVLVGAP…LKRTLLCEAG (158 aa)) constitute a TrmE-type G domain. Asparagine 226 lines the K(+) pocket. Residues 226 to 231 (NVGKSS), 245 to 251 (TDIAGTT), and 270 to 273 (DTAG) contribute to the GTP site. Serine 230 contributes to the Mg(2+) binding site. K(+)-binding residues include threonine 245, isoleucine 247, and threonine 250. Position 251 (threonine 251) interacts with Mg(2+). Residue lysine 448 participates in (6S)-5-formyl-5,6,7,8-tetrahydrofolate binding.

This sequence belongs to the TRAFAC class TrmE-Era-EngA-EngB-Septin-like GTPase superfamily. TrmE GTPase family. Homodimer. Heterotetramer of two MnmE and two MnmG subunits. K(+) serves as cofactor.

The protein resides in the cytoplasm. Functionally, exhibits a very high intrinsic GTPase hydrolysis rate. Involved in the addition of a carboxymethylaminomethyl (cmnm) group at the wobble position (U34) of certain tRNAs, forming tRNA-cmnm(5)s(2)U34. The polypeptide is tRNA modification GTPase MnmE (Neisseria gonorrhoeae (strain ATCC 700825 / FA 1090)).